The primary structure comprises 321 residues: Coiled-coil domain-containing protein 42-like 1 (321 aa).

Coiled coils occupy residues 36 to 144 (IRRL…EKCH) and 202 to 229 (IVQF…WELR).

This sequence belongs to the CFAP73 family.

The chain is Coiled-coil domain-containing protein 42-like 1 from Xenopus laevis (African clawed frog).